Consider the following 565-residue polypeptide: NAD-dependent malic enzyme (565 aa).

Catalysis depends on tyrosine 104, which acts as the Proton donor. Arginine 157 serves as a coordination point for NAD(+). Lysine 175 acts as the Proton acceptor in catalysis. Residues glutamate 246, aspartate 247, and aspartate 270 each contribute to the a divalent metal cation site. NAD(+) contacts are provided by aspartate 270 and asparagine 418.

The protein belongs to the malic enzymes family. As to quaternary structure, homotetramer. Mg(2+) is required as a cofactor. It depends on Mn(2+) as a cofactor.

The catalysed reaction is (S)-malate + NAD(+) = pyruvate + CO2 + NADH. It carries out the reaction oxaloacetate + H(+) = pyruvate + CO2. This is NAD-dependent malic enzyme from Escherichia coli O157:H7.